The primary structure comprises 206 residues: MARYIGPKCKLSRREGTDLFLKSGSRALESKCNVESAPGIHGQRRGRLSEYGTQLREKQKVRRIYGVLERQFSGYYKEASRRKGSTGENLLQLLECRLDNVVYRMGFGATRAESRQLISHKAITVNGQTVNIPSYQVKVGDVVAIREKAKNQLRIAQALELCAQRGRVEWVEVDTEKKSGVFKSVPARSDLSADINENLIVELYSK.

Residues 96 to 156 enclose the S4 RNA-binding domain; that stretch reads CRLDNVVYRM…EKAKNQLRIA (61 aa).

The protein belongs to the universal ribosomal protein uS4 family. Part of the 30S ribosomal subunit. Contacts protein S5. The interaction surface between S4 and S5 is involved in control of translational fidelity.

Functionally, one of the primary rRNA binding proteins, it binds directly to 16S rRNA where it nucleates assembly of the body of the 30S subunit. With S5 and S12 plays an important role in translational accuracy. This Azotobacter vinelandii (strain DJ / ATCC BAA-1303) protein is Small ribosomal subunit protein uS4.